A 743-amino-acid chain; its full sequence is Ribosome biogenesis protein BOP1 homolog (743 aa).

5 WD repeats span residues 365–404 (GHTATVRSVSVSPNGQYLATGCDDHLVRVYEVQTGRLMKR), 575–615 (KFSE…RRFK), 617–655 (SGGVTTCLSIHPEGDNFLVGDTTSHTSWFDMDFSDKPYK), 659–701 (SHKG…DYNK), and 712–743 (KHQRSVYAVAWHPSLAWLFTSTEDGVVTAWTE).

It belongs to the WD repeat BOP1/ERB1 family.

It is found in the nucleus. Its subcellular location is the nucleolus. The protein localises to the nucleoplasm. Functionally, required for maturation of ribosomal RNAs and formation of the large ribosomal subunit. This Leishmania braziliensis protein is Ribosome biogenesis protein BOP1 homolog.